The primary structure comprises 92 residues: PqqA binding protein (92 aa).

Belongs to the PqqD family. In terms of assembly, monomer. Interacts with PqqE.

It functions in the pathway cofactor biosynthesis; pyrroloquinoline quinone biosynthesis. Its function is as follows. Functions as a PqqA binding protein and presents PqqA to PqqE, in the pyrroloquinoline quinone (PQQ) biosynthetic pathway. This is PqqA binding protein from Klebsiella pneumoniae (strain 342).